Consider the following 236-residue polypeptide: Small ribosomal subunit protein uS2c (236 aa).

This sequence belongs to the universal ribosomal protein uS2 family.

Its subcellular location is the plastid. It localises to the chloroplast. The sequence is that of Small ribosomal subunit protein uS2c (rps2) from Lactuca sativa (Garden lettuce).